A 490-amino-acid polypeptide reads, in one-letter code: Serine/threonine-protein kinase BSK6 (490 aa).

The N-myristoyl glycine moiety is linked to residue Gly-2. Ser-25 is modified (phosphoserine). Residues 56 to 310 (DNIVSEHGEK…KSLVTSLVTL (255 aa)) form the Protein kinase domain. ATP-binding positions include 62-70 (HGEKAPNVV) and Lys-84. Asp-178 acts as the Proton acceptor in catalysis. A Phosphoserine modification is found at Ser-373.

Belongs to the protein kinase superfamily. Ser/Thr protein kinase family. Interacts with BRI1, ASK7/BIN2, ASK9/BIL2, BSK1, BSK5, BSK8 and BSK11. In terms of processing, phosphorylated by BRI1, ASK7/BIN2 and ASK9/BIL2.

Its subcellular location is the cell membrane. The catalysed reaction is L-seryl-[protein] + ATP = O-phospho-L-seryl-[protein] + ADP + H(+). It carries out the reaction L-threonyl-[protein] + ATP = O-phospho-L-threonyl-[protein] + ADP + H(+). In terms of biological role, probable serine/threonine kinase that acts as a positive regulator of brassinosteroid (BR) signaling downstream of the receptor kinase BRI1. Functions redundantly with BSK3, BSK4, BSK7 and BSK8. The polypeptide is Serine/threonine-protein kinase BSK6 (Arabidopsis thaliana (Mouse-ear cress)).